Reading from the N-terminus, the 589-residue chain is Peptide transporter PTR_A (589 aa).

The tract at residues 1–56 is disordered; sequence MSETKPAANDLSNVPSASDSDKDNSLDKVHSLEKTGVHEDINKLPSSDLEQLEDDG. Residues 19–42 are compositionally biased toward basic and acidic residues; that stretch reads DSDKDNSLDKVHSLEKTGVHEDIN. 4 consecutive transmembrane segments (helical) span residues 74–95, 124–144, 153–173, and 180–200; these read IPLS…YYGL, ALSY…AWIA, AICI…ITSI, and NTSL…TGGV. N-linked (GlcNAc...) asparagine glycosylation occurs at Asn233. 8 helical membrane-spanning segments follow: residues 236 to 256, 266 to 286, 345 to 365, 388 to 408, 420 to 440, 467 to 487, 502 to 522, and 533 to 553; these read IQNV…SVIA, FWAG…VLLL, VYAC…GQMI, INAI…YPFI, IFWG…LQHF, IAIQ…ASIT, SFIM…GIAL, and WTYT…YIIF.

This sequence belongs to the major facilitator superfamily. Proton-dependent oligopeptide transporter (POT/PTR) (TC 2.A.17) family.

Its subcellular location is the cell membrane. It carries out the reaction a dipeptide(out) + H(+)(out) = a dipeptide(in) + H(+)(in). The catalysed reaction is an L-amino acid tripeptide(out) + H(+)(out) = an L-amino acid tripeptide(in) + H(+)(in). Peptide transporter that exploits the inwardly directed proton motive force to facilitate the cellular uptake of di/tripeptides. The polypeptide is Peptide transporter PTR_A (Candidozyma auris (Yeast)).